Reading from the N-terminus, the 72-residue chain is Potassium channel toxin epsilon-KTx 1.1 (72 aa).

Residues 1–30 (MKLSCGFLLILLVLSAMIATFSEVEAMKPS) form the signal peptide. Intrachain disulfides connect Cys34-Cys42, Cys37-Cys58, Cys41-Cys51, and Cys46-Cys56. The propeptide occupies 60–72 (GRSDLNDELEKYQ).

The protein belongs to the short scorpion toxin superfamily. Potassium channel inhibitor family. Epsilon-KTx 01 subfamily. As to expression, expressed by the venom gland.

The protein localises to the secreted. In terms of biological role, potassium channel blocker. At 3 uM, this toxin blocks voltage-independently voltage-gated potassium channels rKv1.2/KCNA2 (25%), hKv1.3/KCNA3 (27%), rKv4.2/KCND2 (25%), Kv10.1/KCNH1/EAG1 (15%), Kv11/hERG (12%), and Shaker-IR (10%). On hKv1.3/KCNA3, the IC(50) is 17.1 +-3.3 uM. The polypeptide is Potassium channel toxin epsilon-KTx 1.1 (Tityus serrulatus (Brazilian scorpion)).